The primary structure comprises 225 residues: Ribonuclease 3 (225 aa).

An RNase III domain is found at Leu5 to Asp127. Glu40 provides a ligand contact to Mg(2+). Residue Asp44 is part of the active site. The Mg(2+) site is built by Asp113 and Glu116. Residue Glu116 is part of the active site. The 71-residue stretch at Asp154–Met224 folds into the DRBM domain.

This sequence belongs to the ribonuclease III family. In terms of assembly, homodimer. The cofactor is Mg(2+).

It is found in the cytoplasm. It carries out the reaction Endonucleolytic cleavage to 5'-phosphomonoester.. In terms of biological role, digests double-stranded RNA. Involved in the processing of primary rRNA transcript to yield the immediate precursors to the large and small rRNAs (23S and 16S). Also processes some mRNAs, and tRNAs when they are encoded in the rRNA operon. Functionally, CRISPR (clustered regularly interspaced short palindromic repeat) is an adaptive immune system that provides protection against mobile genetic elements (viruses, transposable elements and conjugative plasmids). CRISPR clusters contain spacers, sequences complementary to antecedent mobile elements, and target invading nucleic acids. CRISPR clusters are transcribed and processed into CRISPR RNA (crRNA). In this organism endogenous ribonuclease 3 and Cas9 are required for correct coprocessing of pre-crRNA and the trans-encoded small RNA (tracrRNA). Cas9, crRNA and tracrRNA are required for cleavage of invading DNA. Complements pre-crRNA and tracrRNA coprocessing defects in an rnc deletion in S.pyogenes strain 370. This is Ribonuclease 3 from Pasteurella multocida (strain Pm70).